The following is a 211-amino-acid chain: Peptide methionine sulfoxide reductase MsrA (211 aa).

The active site involves Cys-52.

Belongs to the MsrA Met sulfoxide reductase family.

The catalysed reaction is L-methionyl-[protein] + [thioredoxin]-disulfide + H2O = L-methionyl-(S)-S-oxide-[protein] + [thioredoxin]-dithiol. It catalyses the reaction [thioredoxin]-disulfide + L-methionine + H2O = L-methionine (S)-S-oxide + [thioredoxin]-dithiol. Functionally, has an important function as a repair enzyme for proteins that have been inactivated by oxidation. Catalyzes the reversible oxidation-reduction of methionine sulfoxide in proteins to methionine. The polypeptide is Peptide methionine sulfoxide reductase MsrA (Photobacterium profundum (strain SS9)).